We begin with the raw amino-acid sequence, 1324 residues long: Synaptojanin-1 (1324 aa).

Positions 119 to 442 (VRKVLNSGNF…GDSISKIYAG (324 aa)) constitute an SAC domain. The interval 475–859 (AIDVLLLGNT…GRAELKTSDH (385 aa)) is catalytic. Phosphoserine is present on residues Ser820 and Ser830. In terms of domain architecture, RRM spans 902-971 (SSLPENNFFN…RTITITLKSP (70 aa)). The segment at 1030-1324 (LQPSSSSALA…SDPFEDLSLN (295 aa)) is disordered. The segment covering 1080-1103 (ASQSSPVDTLPATQLQQKDSSQTL) has biased composition (polar residues). Residues 1108-1130 (PPPPRPVAPPARPAPPQRPPPPS) show a composition bias toward pro residues. Residues 1138 to 1156 (ARERVWSTRKAQERPRRDN) show a composition bias toward basic and acidic residues. Position 1186 is an omega-N-methylarginine (Arg1186). At Thr1205 the chain carries Phosphothreonine. Ser1277 bears the Phosphoserine mark. Low complexity predominate over residues 1278–1292 (SHSLPSDAPAAAAGA).

It belongs to the synaptojanin family. The protein in the central section; belongs to the inositol 1,4,5-trisphosphate 5-phosphatase family. Interacts with ASH/GRB2. Interacts with PACSIN1, PACSIN2 and PACSIN3. Interacts with AMPH, SH3GL1, SH3GL2 and SH3GL3. Interacts with MYO1E (via SH3 domain). Interacts with BIN1 and DNM1. Interacts with EPS15. In terms of tissue distribution, ubiquitously expressed with highest levels in brain.

Its subcellular location is the cytoplasm. The protein localises to the perinuclear region. It catalyses the reaction a 1,2-diacyl-sn-glycero-3-phospho-(1D-myo-inositol-4,5-bisphosphate) + H2O = a 1,2-diacyl-sn-glycero-3-phospho-(1D-myo-inositol 4-phosphate) + phosphate. Functionally, phosphatase that acts on various phosphoinositides, including phosphatidylinositol 4-phosphate, phosphatidylinositol (4,5)-bisphosphate and phosphatidylinositol (3,4,5)-trisphosphate. Has a role in clathrin-mediated endocytosis. Hydrolyzes PIP2 bound to actin regulatory proteins resulting in the rearrangement of actin filaments downstream of tyrosine kinase and ASH/GRB2. The sequence is that of Synaptojanin-1 (SYNJ1) from Bos taurus (Bovine).